Here is a 217-residue protein sequence, read N- to C-terminus: MAPGSRTSLLLAFGLLCLPWLQEGSAFPTIPLSRLFDNAMLRAHRLHQLAFDTYQEFEEAYIPKEQKYSFLQNPQTSLCFSESIPTPSNREETQQKSNLELLRISLLLIQSWLEPVQFLRSVFANSLVYGASDSNVYDLLKDLEEGIQTLMGRLEDGSPRTGQIFKQTYSKFDTNSHNDDALLKNYGLLYCFRKDMDKVETFLRIVQCRSVEGSCGF.

A signal peptide spans 1 to 26 (MAPGSRTSLLLAFGLLCLPWLQEGSA). Zn(2+) is bound at residue H44. A disulfide bridge links C79 with C191. S132 carries the phosphoserine modification. E200 provides a ligand contact to Zn(2+). A disulfide bond links C208 and C215.

This sequence belongs to the somatotropin/prolactin family.

It is found in the secreted. Its function is as follows. Plays an important role in growth control. Its major role in stimulating body growth is to stimulate the liver and other tissues to secrete IGF1. It stimulates both the differentiation and proliferation of myoblasts. It also stimulates amino acid uptake and protein synthesis in muscle and other tissues. The polypeptide is Somatotropin (GH1) (Pan troglodytes (Chimpanzee)).